Here is a 352-residue protein sequence, read N- to C-terminus: Histidine biosynthesis bifunctional protein HisB (352 aa).

A histidinol-phosphatase region spans residues 1-164; it reads MSQKILFIDR…EIENEILSSF (164 aa). D9 (nucleophile) is an active-site residue. Residues D9 and D11 each coordinate Mg(2+). D11 serves as the catalytic Proton donor. Residues C93, H95, C101, and C103 each coordinate Zn(2+). D130 lines the Mg(2+) pocket. Residues 165-352 form an imidazoleglycerol-phosphate dehydratase region; the sequence is RSASYQRTTK…ENLASSKGVI (188 aa).

It in the N-terminal section; belongs to the histidinol-phosphatase family. In the C-terminal section; belongs to the imidazoleglycerol-phosphate dehydratase family. It depends on Mg(2+) as a cofactor. Zn(2+) serves as cofactor.

It is found in the cytoplasm. The enzyme catalyses D-erythro-1-(imidazol-4-yl)glycerol 3-phosphate = 3-(imidazol-4-yl)-2-oxopropyl phosphate + H2O. It catalyses the reaction L-histidinol phosphate + H2O = L-histidinol + phosphate. The protein operates within amino-acid biosynthesis; L-histidine biosynthesis; L-histidine from 5-phospho-alpha-D-ribose 1-diphosphate: step 6/9. It participates in amino-acid biosynthesis; L-histidine biosynthesis; L-histidine from 5-phospho-alpha-D-ribose 1-diphosphate: step 8/9. The polypeptide is Histidine biosynthesis bifunctional protein HisB (Campylobacter jejuni subsp. jejuni serotype O:6 (strain 81116 / NCTC 11828)).